The following is a 694-amino-acid chain: Frizzled-2 (694 aa).

An N-terminal signal peptide occupies residues 1–22; sequence MRHNRLKVLILGLVLLLTSCRA. Residues 23-315 lie on the Extracellular side of the membrane; it reads DGPLHSADHG…GPFFSNDEKD (293 aa). One can recognise an FZ domain in the interval 59-180; that stretch reads DPNLRCEEIT…GDPDNLCMEQ (122 aa). 5 disulfides stabilise this stretch: cysteine 64–cysteine 125, cysteine 72–cysteine 118, cysteine 109–cysteine 147, cysteine 136–cysteine 177, and cysteine 140–cysteine 164. Asparagine 78 is a glycosylation site (N-linked (GlcNAc...) asparagine). Residues 175–253 are disordered; that stretch reads NLCMEQPSYT…QGEKASGKEC (79 aa). A compositionally biased stretch (gly residues) spans 187 to 224; it reads GSGGSSGGSGGSGSGSGSGGKRKQGGSGSGGSGAGGSS. An N-linked (GlcNAc...) asparagine glycan is attached at asparagine 288. The chain crosses the membrane as a helical span at residues 316–336; the sequence is FAGLWIALWSGLCFCSTLMTL. Residues 337–352 are Cytoplasmic-facing; sequence TTFIIDTERFKYPERP. Residues 353-373 traverse the membrane as a helical segment; the sequence is IVFLSACYFMVAVGYLSRNFL. At 374 to 397 the chain is on the extracellular side; sequence QNEEIACDGLLLRESSTGPHSCTL. A helical transmembrane segment spans residues 398–418; that stretch reads VFLLTYFFGMASSIWWVILSF. At 419–439 the chain is on the cytoplasmic side; the sequence is TWFLAAGLKWGNEAITKHSQY. Residues 440–460 traverse the membrane as a helical segment; that stretch reads FHLAAWLIPTVQSVAVLLLSA. Over 461 to 482 the chain is Extracellular; it reads VDGDPILGICYVGNLNPDHLKT. A helical transmembrane segment spans residues 483–503; that stretch reads FVLAPLFVYLVIGTTFLMAGF. Topologically, residues 504–534 are cytoplasmic; sequence VSLFRIRSVIKQQGGVGAGVKADKLEKLMIR. A helical membrane pass occupies residues 535 to 555; that stretch reads IGIFSVLYTVPATIVIGCYLY. At 556-584 the chain is on the extracellular side; it reads EAAYFEDWIKALACPCAQVKGPGKKPLYS. The chain crosses the membrane as a helical span at residues 585–605; that stretch reads VLMLKYFMALAVGITSGVWIW. Over 606–694 the chain is Cytoplasmic; that stretch reads SGKTLESWRR…VLKQPAASHV (89 aa). The short motif at 608 to 613 is the Lys-Thr-X-X-X-Trp motif, mediates interaction with the PDZ domain of Dvl family members element; the sequence is KTLESW. Positions 692 to 694 match the PDZ-binding motif; the sequence is SHV.

The protein belongs to the G-protein coupled receptor Fz/Smo family. Interacts with ATP6AP2.

Its subcellular location is the cell membrane. Functionally, receptor for Wnt proteins. Most of frizzled receptors are coupled to the beta-catenin canonical signaling pathway, which leads to the activation of disheveled proteins, inhibition of GSK-3 kinase, nuclear accumulation of beta-catenin and activation of Wnt target genes. A second signaling pathway involving PKC and calcium fluxes has been seen for some family members, but it is not yet clear if it represents a distinct pathway or if it can be integrated in the canonical pathway, as PKC seems to be required for Wnt-mediated inactivation of GSK-3 kinase. Both pathways seem to involve interactions with G-proteins. Required to coordinate the cytoskeletons of epidermal cells to produce a parallel array of cuticular hairs and bristles. This chain is Frizzled-2 (fz2), found in Drosophila melanogaster (Fruit fly).